A 558-amino-acid chain; its full sequence is INCREASED PETAL GROWTH ANISOTROPY 1-like protein 2 (558 aa).

Over residues 1-15 (MSRISTTSTTPSRVR) the composition is skewed to low complexity. A disordered region spans residues 1 to 54 (MSRISTTSTTPSRVRAANSHYSVISKPRAQDDNGLTGGKPKSSGYDVKNDPAKR). The stretch at 104 to 180 (VMATAAAEDE…EAKISSLSSN (77 aa)) forms a coiled coil. A disordered region spans residues 207–285 (KVKKEVAVES…AARAQKSPPV (79 aa)). 2 stretches are compositionally biased toward pro residues: residues 221 to 236 (PPSP…PPLP) and 256 to 272 (FAPP…PPRP). Residues 392 to 448 (KADTLQEAAVEYRELKKLEKELSSYSDDPNIHYGVALKKMANLLDKSEQRIRRLVRL) are a coiled coil.

The protein belongs to the IPGA1 family.

Its subcellular location is the cytoplasm. The protein localises to the cytoskeleton. Its function is as follows. Microtubule-associated protein probably involved in the regulation of microtubule organization. In Arabidopsis thaliana (Mouse-ear cress), this protein is INCREASED PETAL GROWTH ANISOTROPY 1-like protein 2.